The following is a 306-amino-acid chain: Ubiquitin carboxyl-terminal hydrolase RPN11 (306 aa).

Met-1 bears the N-acetylmethionine mark. The interval 1–20 is disordered; sequence MERLQRLMMNSKVGSADTGR. The MPN domain occupies 27-162; sequence VYISSIALLK…IDAFRLIDTG (136 aa). Positions 109, 111, and 122 each coordinate Zn(2+). The JAMM motif motif lies at 109–122; sequence HSHPGFGCWLSSVD.

This sequence belongs to the peptidase M67A family. In terms of assembly, component of the lid subcomplex of the 19S proteasome regulatory particle complex (also named PA700 complex). The 26S proteasome consists of a 20S proteasome core and two 19S regulatory subunits. Interacts directly with RPN8 and STS1. N-acetylated by NAT3.

The enzyme catalyses Thiol-dependent hydrolysis of ester, thioester, amide, peptide and isopeptide bonds formed by the C-terminal Gly of ubiquitin (a 76-residue protein attached to proteins as an intracellular targeting signal).. Functionally, component of the lid subcomplex of the 26S proteasome, a multiprotein complex involved in the ATP-dependent degradation of ubiquitinated proteins. RPN11 is the only catalytically active member of the lid and serves as the essential deubiquitinase of the proteasome. The chain is Ubiquitin carboxyl-terminal hydrolase RPN11 (RPN11) from Saccharomyces cerevisiae (strain ATCC 204508 / S288c) (Baker's yeast).